Consider the following 233-residue polypeptide: 5-demethoxyubiquinone hydroxylase, mitochondrial (233 aa).

A mitochondrion-targeting transit peptide spans 1–15; the sequence is MLSRVSVFKPASRGF. Ser20 and Ser28 each carry phosphoserine. Thr32 carries the post-translational modification Phosphothreonine. Fe cation is bound by residues Glu63, Glu95, His98, Glu147, Glu194, and His197.

Belongs to the COQ7 family. Component of a multi-subunit COQ enzyme complex, composed of at least COQ3, COQ4, COQ5, COQ6, COQ7 and COQ9. The cofactor is Fe cation. In terms of processing, phosphorylated. Dephosphorylated by PTC7; dephosphorylation is essential for enzyme activation.

The protein localises to the mitochondrion inner membrane. The catalysed reaction is a 5-methoxy-2-methyl-3-(all-trans-polyprenyl)benzene-1,4-diol + AH2 + O2 = a 3-demethylubiquinol + A + H2O. The enzyme catalyses a 5-methoxy-2-methyl-3-(all-trans-polyprenyl)benzoquinone + NADH + O2 = a 3-demethylubiquinone + NAD(+) + H2O. It participates in cofactor biosynthesis; ubiquinone biosynthesis. Dephosphorylation by PTC7 leads to activation. Its function is as follows. Catalyzes the hydroxylation of 2-hexaprenyl-3-methyl-6-methoxy-1,4-benzoquinol (DMQH2) during ubiquinone biosynthesis. Also catalyzes the hydroxylation of the 5-methoxy-2-methyl-3-(all-trans-polyprenyl)benzoquinone at the C6 position and participates in the biosynthesis of ubiquinone. Also has a structural role in the COQ enzyme complex, stabilizing COQ3 and COQ4 polypeptides. The chain is 5-demethoxyubiquinone hydroxylase, mitochondrial from Saccharomyces cerevisiae (strain ATCC 204508 / S288c) (Baker's yeast).